Reading from the N-terminus, the 546-residue chain is 2-isopropylmalate synthase (546 aa).

Residues 8-271 (ILIFDTTLRD…NSFFKRNPDS (264 aa)) form the Pyruvate carboxyltransferase domain. Residues aspartate 17, histidine 208, histidine 210, and asparagine 244 each contribute to the Mn(2+) site. The regulatory domain stretch occupies residues 408 to 546 (QLSLVQVSCG…TNTFLSNNAN (139 aa)).

Belongs to the alpha-IPM synthase/homocitrate synthase family. LeuA type 1 subfamily. As to quaternary structure, homodimer. Requires Mn(2+) as cofactor.

It is found in the cytoplasm. It carries out the reaction 3-methyl-2-oxobutanoate + acetyl-CoA + H2O = (2S)-2-isopropylmalate + CoA + H(+). Its pathway is amino-acid biosynthesis; L-leucine biosynthesis; L-leucine from 3-methyl-2-oxobutanoate: step 1/4. Catalyzes the condensation of the acetyl group of acetyl-CoA with 3-methyl-2-oxobutanoate (2-ketoisovalerate) to form 3-carboxy-3-hydroxy-4-methylpentanoate (2-isopropylmalate). This Prochlorococcus marinus (strain AS9601) protein is 2-isopropylmalate synthase.